The chain runs to 192 residues: Peptide deformylase 1 (192 aa).

Residues Cys-101 and His-143 each contribute to the Fe cation site. Residue Glu-144 is part of the active site. His-147 is a Fe cation binding site.

Belongs to the polypeptide deformylase family. The cofactor is Fe(2+).

It carries out the reaction N-terminal N-formyl-L-methionyl-[peptide] + H2O = N-terminal L-methionyl-[peptide] + formate. Functionally, removes the formyl group from the N-terminal Met of newly synthesized proteins. Requires at least a dipeptide for an efficient rate of reaction. N-terminal L-methionine is a prerequisite for activity but the enzyme has broad specificity at other positions. This chain is Peptide deformylase 1, found in Prochlorococcus marinus (strain MIT 9313).